Here is a 119-residue protein sequence, read N- to C-terminus: Beta-2-microglobulin (119 aa).

The signal sequence occupies residues M1 to A20. The Ig-like C1-type domain occupies P25–T114. C45 and C100 are oxidised to a cystine.

This sequence belongs to the beta-2-microglobulin family. In terms of assembly, heterodimer of an alpha chain and a beta chain. Beta-2-microglobulin is the beta-chain of major histocompatibility complex class I molecules.

The protein resides in the secreted. Its function is as follows. Component of the class I major histocompatibility complex (MHC). Involved in the presentation of peptide antigens to the immune system. The sequence is that of Beta-2-microglobulin (B2M) from Cricetulus griseus (Chinese hamster).